The following is a 197-amino-acid chain: ATP synthase subunit delta (197 aa).

Belongs to the ATPase delta chain family. In terms of assembly, F-type ATPases have 2 components, F(1) - the catalytic core - and F(0) - the membrane proton channel. F(1) has five subunits: alpha(3), beta(3), gamma(1), delta(1), epsilon(1). F(0) has three main subunits: a(1), b(2) and c(10-14). The alpha and beta chains form an alternating ring which encloses part of the gamma chain. F(1) is attached to F(0) by a central stalk formed by the gamma and epsilon chains, while a peripheral stalk is formed by the delta and b chains.

Its subcellular location is the cell inner membrane. Its function is as follows. F(1)F(0) ATP synthase produces ATP from ADP in the presence of a proton or sodium gradient. F-type ATPases consist of two structural domains, F(1) containing the extramembraneous catalytic core and F(0) containing the membrane proton channel, linked together by a central stalk and a peripheral stalk. During catalysis, ATP synthesis in the catalytic domain of F(1) is coupled via a rotary mechanism of the central stalk subunits to proton translocation. Functionally, this protein is part of the stalk that links CF(0) to CF(1). It either transmits conformational changes from CF(0) to CF(1) or is implicated in proton conduction. The chain is ATP synthase subunit delta from Bartonella henselae (strain ATCC 49882 / DSM 28221 / CCUG 30454 / Houston 1) (Rochalimaea henselae).